A 230-amino-acid chain; its full sequence is Small ribosomal subunit protein uS3 (230 aa).

The region spanning 43–95 is the KH type-2 domain; that stretch reads VNRVIIYSARPKMISEERKAHLAKLLELKFGLEKPVIEVLPIENPNLDAHVIA.

The protein belongs to the universal ribosomal protein uS3 family. As to quaternary structure, part of the 30S ribosomal subunit.

Its function is as follows. Binds the lower part of the 30S subunit head. This Nanoarchaeum equitans (strain Kin4-M) protein is Small ribosomal subunit protein uS3.